The chain runs to 347 residues: N-acetyl-gamma-glutamyl-phosphate reductase (347 aa).

Residue Cys152 is part of the active site.

This sequence belongs to the NAGSA dehydrogenase family. Type 1 subfamily.

Its subcellular location is the cytoplasm. It catalyses the reaction N-acetyl-L-glutamate 5-semialdehyde + phosphate + NADP(+) = N-acetyl-L-glutamyl 5-phosphate + NADPH + H(+). It participates in amino-acid biosynthesis; L-arginine biosynthesis; N(2)-acetyl-L-ornithine from L-glutamate: step 3/4. Its function is as follows. Catalyzes the NADPH-dependent reduction of N-acetyl-5-glutamyl phosphate to yield N-acetyl-L-glutamate 5-semialdehyde. The sequence is that of N-acetyl-gamma-glutamyl-phosphate reductase from Ehrlichia ruminantium (strain Gardel).